Here is a 357-residue protein sequence, read N- to C-terminus: Uroporphyrinogen decarboxylase (357 aa).

Substrate contacts are provided by residues 34–38 (RQAGR), Asp-83, Tyr-158, Ser-213, and His-336.

It belongs to the uroporphyrinogen decarboxylase family. In terms of assembly, homodimer.

The protein localises to the cytoplasm. The enzyme catalyses uroporphyrinogen III + 4 H(+) = coproporphyrinogen III + 4 CO2. It functions in the pathway porphyrin-containing compound metabolism; protoporphyrin-IX biosynthesis; coproporphyrinogen-III from 5-aminolevulinate: step 4/4. Functionally, catalyzes the decarboxylation of four acetate groups of uroporphyrinogen-III to yield coproporphyrinogen-III. The polypeptide is Uroporphyrinogen decarboxylase (Mycolicibacterium paratuberculosis (strain ATCC BAA-968 / K-10) (Mycobacterium paratuberculosis)).